Reading from the N-terminus, the 446-residue chain is CBL-interacting protein kinase 8 (446 aa).

The 254-residue stretch at 13 to 266 folds into the Protein kinase domain; sequence YEVGRTIGEG…IEEIRNDEWF (254 aa). ATP-binding positions include 19 to 27 and lysine 42; that span reads IGEGTFAKV. Aspartate 136 serves as the catalytic Proton acceptor. The segment at 154 to 181 is activation loop; that stretch reads DFGLSAWPAQGGALLRTTCGTPNYVAPE. The region spanning 301–329 is the NAF domain; the sequence is LDDEAGPLTLNAFDLIILSQGLNLAALFD. The PPI stretch occupies residues 336 to 365; it reads KLQNRFLSRKPAKVIMSSMEVVAQSMGYKT.

This sequence belongs to the protein kinase superfamily. CAMK Ser/Thr protein kinase family. SNF1 subfamily. Mn(2+) is required as a cofactor.

The catalysed reaction is L-seryl-[protein] + ATP = O-phospho-L-seryl-[protein] + ADP + H(+). It catalyses the reaction L-threonyl-[protein] + ATP = O-phospho-L-threonyl-[protein] + ADP + H(+). In terms of biological role, CIPK serine-threonine protein kinases interact with CBL proteins. Binding of a CBL protein to the regulatory NAF domain of CIPK protein lead to the activation of the kinase in a calcium-dependent manner. This Oryza sativa subsp. japonica (Rice) protein is CBL-interacting protein kinase 8 (CIPK8).